We begin with the raw amino-acid sequence, 115 residues long: NADH-ubiquinone oxidoreductase chain 3 (115 aa).

3 helical membrane-spanning segments follow: residues 4 to 24, 55 to 75, and 84 to 104; these read LMILSVNIILSTCLIMIAFWL, FFLVAITFLLFDLEIALLLPL, and INMMMSTAFILVSILALGLAY.

This sequence belongs to the complex I subunit 3 family. Core subunit of respiratory chain NADH dehydrogenase (Complex I) which is composed of 45 different subunits. Interacts with TMEM186. Interacts with TMEM242.

Its subcellular location is the mitochondrion inner membrane. The enzyme catalyses a ubiquinone + NADH + 5 H(+)(in) = a ubiquinol + NAD(+) + 4 H(+)(out). Its function is as follows. Core subunit of the mitochondrial membrane respiratory chain NADH dehydrogenase (Complex I) which catalyzes electron transfer from NADH through the respiratory chain, using ubiquinone as an electron acceptor. Essential for the catalytic activity of complex I. In Podomys floridanus (Florida mouse), this protein is NADH-ubiquinone oxidoreductase chain 3.